The following is a 290-amino-acid chain: Ribosomal RNA small subunit methyltransferase A (290 aa).

Residues N27, L29, G54, E75, D100, and N125 each coordinate S-adenosyl-L-methionine.

The protein belongs to the class I-like SAM-binding methyltransferase superfamily. rRNA adenine N(6)-methyltransferase family. RsmA subfamily.

The protein resides in the cytoplasm. The enzyme catalyses adenosine(1518)/adenosine(1519) in 16S rRNA + 4 S-adenosyl-L-methionine = N(6)-dimethyladenosine(1518)/N(6)-dimethyladenosine(1519) in 16S rRNA + 4 S-adenosyl-L-homocysteine + 4 H(+). Its function is as follows. Specifically dimethylates two adjacent adenosines (A1518 and A1519) in the loop of a conserved hairpin near the 3'-end of 16S rRNA in the 30S particle. May play a critical role in biogenesis of 30S subunits. This is Ribosomal RNA small subunit methyltransferase A from Streptococcus pyogenes serotype M3 (strain ATCC BAA-595 / MGAS315).